A 77-amino-acid chain; its full sequence is Acyl carrier protein (77 aa).

In terms of domain architecture, Carrier spans 1-77; the sequence is MSVEAKVKKI…DAIEYIRKKS (77 aa). Ser37 bears the O-(pantetheine 4'-phosphoryl)serine mark.

The protein belongs to the acyl carrier protein (ACP) family. Post-translationally, 4'-phosphopantetheine is transferred from CoA to a specific serine of apo-ACP by AcpS. This modification is essential for activity because fatty acids are bound in thioester linkage to the sulfhydryl of the prosthetic group.

It is found in the cytoplasm. It functions in the pathway lipid metabolism; fatty acid biosynthesis. Its function is as follows. Carrier of the growing fatty acid chain in fatty acid biosynthesis. The chain is Acyl carrier protein from Desulforapulum autotrophicum (strain ATCC 43914 / DSM 3382 / VKM B-1955 / HRM2) (Desulfobacterium autotrophicum).